The chain runs to 669 residues: Major S-layer protein (669 aa).

The first 24 residues, 1-24 (MKRFAAVSLAALMLLTVFASAASA), serve as a signal peptide directing secretion. N-linked (GlcNAc...) asparagine glycosylation is found at Asn-36, Asn-70, Asn-116, Asn-600, and Asn-607. The interval 588–648 (DGEVVDDDED…PTEADGTTPG (61 aa)) is disordered. The span at 590–627 (EVVDDDEDDDNVTEPVDNDTEVEEPTEEPTEGPTEEPT) shows a compositional bias: acidic residues. A helical membrane pass occupies residues 645-665 (TTPGFGVVLGLVGLLAVVYLV).

Belongs to the Methanosarcinales S-layer protein family. In terms of processing, glycosylated.

Its subcellular location is the secreted. The protein resides in the cell wall. The protein localises to the S-layer. It localises to the cell membrane. Its function is as follows. S-layer protein. The S-layer is a paracrystalline mono-layered assembly of proteins which coat the surface of the cell. In Methanosarcina mazei (strain ATCC BAA-159 / DSM 3647 / Goe1 / Go1 / JCM 11833 / OCM 88) (Methanosarcina frisia), this protein is Major S-layer protein.